Reading from the N-terminus, the 196-residue chain is ATP-dependent Clp protease proteolytic subunit (196 aa).

The Nucleophile role is filled by serine 101. Histidine 126 is an active-site residue.

The protein belongs to the peptidase S14 family. As to quaternary structure, component of the chloroplastic Clp protease core complex.

The protein localises to the plastid. It is found in the chloroplast stroma. It catalyses the reaction Hydrolysis of proteins to small peptides in the presence of ATP and magnesium. alpha-casein is the usual test substrate. In the absence of ATP, only oligopeptides shorter than five residues are hydrolyzed (such as succinyl-Leu-Tyr-|-NHMec, and Leu-Tyr-Leu-|-Tyr-Trp, in which cleavage of the -Tyr-|-Leu- and -Tyr-|-Trp bonds also occurs).. Cleaves peptides in various proteins in a process that requires ATP hydrolysis. Has a chymotrypsin-like activity. Plays a major role in the degradation of misfolded proteins. This chain is ATP-dependent Clp protease proteolytic subunit, found in Arabis hirsuta (Hairy rock-cress).